A 364-amino-acid polypeptide reads, in one-letter code: Caffeic acid 3-O-methyltransferase (364 aa).

Met131–Leu137 is a binding site for substrate. The interval Ala163 to Met181 is substrate binding. Gly209, Asp232, Asp252, Met253, and Lys266 together coordinate S-adenosyl-L-methionine. Catalysis depends on His270, which acts as the Proton acceptor.

This sequence belongs to the class I-like SAM-binding methyltransferase superfamily. Cation-independent O-methyltransferase family. COMT subfamily. Homodimer. As to expression, confined to the vascular tissues of organs undergoing lignification such as stems and roots.

The catalysed reaction is (E)-caffeate + S-adenosyl-L-methionine = (E)-ferulate + S-adenosyl-L-homocysteine + H(+). It carries out the reaction tricetin + 2 S-adenosyl-L-methionine = 3',5'-di-O-methyltricetin + 2 S-adenosyl-L-homocysteine + 2 H(+). It catalyses the reaction luteolin + S-adenosyl-L-methionine = chrysoeriol + S-adenosyl-L-homocysteine + H(+). The enzyme catalyses tricetin + S-adenosyl-L-methionine = 3'-O-methyltricetin + S-adenosyl-L-homocysteine + H(+). It participates in aromatic compound metabolism; phenylpropanoid biosynthesis. Functionally, catalyzes the conversion of caffeic acid to ferulic acid and of 5-hydroxyferulic acid to sinapic acid. The resulting products may subsequently be converted to the corresponding alcohols that are incorporated into lignins. Can use the flavone tricetin (5,7,3',4',5'-pentahydroxyflavone) as the preferred substrate and give rise to its 3',5'-dimethyl derivative, tricin (3',5'-dimethoxy-5,7,4'-trihydroxyflavone), as the major product, and selgin to a lower extent. Tricin exhibits potential benefits for human health including relaxant effect on smooth muscle of intestinal tissues, antioxidant effect, antihistaminic activity, and growth inhibition of human malignant breast tumor cells and colon cancer cells. Can also use luteolin, quercetin and 5-hydroxyferulic acid (5HF) as substrates. This is Caffeic acid 3-O-methyltransferase from Zea mays (Maize).